A 347-amino-acid polypeptide reads, in one-letter code: NADH-ubiquinone oxidoreductase chain 2 (347 aa).

Helical transmembrane passes span 3–23, 59–79, 89–109, 150–170, 178–198, 201–221, 237–257, 276–296, and 326–346; these read PMTFSLIMMTMVSGTFLVMMS, YFLTQATASMLLMMAAIINLL, LINPMASVTMTMALAMKLGLA, NLNILMIMALLSIAIGGWGGL, IMAYSSIAHMGWMMSVLMYNP, MLLNLYLYIPMTITTFSLLMI, LPLITMIILITMLSLGGLPPL, IILSTVMALLALLNLYFYTRI, and LPLMIIISTLILPVSPMTAIL.

This sequence belongs to the complex I subunit 2 family. Core subunit of respiratory chain NADH dehydrogenase (Complex I) which is composed of 45 different subunits. Interacts with TMEM242.

The protein localises to the mitochondrion inner membrane. The enzyme catalyses a ubiquinone + NADH + 5 H(+)(in) = a ubiquinol + NAD(+) + 4 H(+)(out). In terms of biological role, core subunit of the mitochondrial membrane respiratory chain NADH dehydrogenase (Complex I) which catalyzes electron transfer from NADH through the respiratory chain, using ubiquinone as an electron acceptor. Essential for the catalytic activity and assembly of complex I. In Nyctophilus arnhemensis (Northern long-eared bat), this protein is NADH-ubiquinone oxidoreductase chain 2.